Consider the following 246-residue polypeptide: 1-(5-phosphoribosyl)-5-[(5-phosphoribosylamino)methylideneamino] imidazole-4-carboxamide isomerase (246 aa).

Asp8 (proton acceptor) is an active-site residue. Residue Asp130 is the Proton donor of the active site.

This sequence belongs to the HisA/HisF family.

It is found in the cytoplasm. It carries out the reaction 1-(5-phospho-beta-D-ribosyl)-5-[(5-phospho-beta-D-ribosylamino)methylideneamino]imidazole-4-carboxamide = 5-[(5-phospho-1-deoxy-D-ribulos-1-ylimino)methylamino]-1-(5-phospho-beta-D-ribosyl)imidazole-4-carboxamide. It participates in amino-acid biosynthesis; L-histidine biosynthesis; L-histidine from 5-phospho-alpha-D-ribose 1-diphosphate: step 4/9. This is 1-(5-phosphoribosyl)-5-[(5-phosphoribosylamino)methylideneamino] imidazole-4-carboxamide isomerase from Hydrogenovibrio crunogenus (strain DSM 25203 / XCL-2) (Thiomicrospira crunogena).